The chain runs to 122 residues: RING-box protein 1B (122 aa).

Acidic residues predominate over residues 1-23 (MAEEIEVEETEDFHDMDFNDEEP). Residues 1–28 (MAEEIEVEETEDFHDMDFNDEEPSCSGG) form a disordered region. Zn(2+) contacts are provided by cysteine 57, cysteine 60, cysteine 68, cysteine 71, cysteine 82, cysteine 89, histidine 91, histidine 94, histidine 96, cysteine 108, and aspartate 111. Residues 57–112 (CAICRNHIMNLCIECQADPNANQDECTVAWGECNHAFHYHCIARWLKTRLVCPLDN) form an RING-type zinc finger.

The protein belongs to the RING-box family. Part of a SCF complex consisting of Skpa (SKP1), Cul1, Roc1B and a F-box protein. In terms of tissue distribution, highly expressed in early embryos, and in pupae. Widely expressed in adult males, while it is weakly expressed in adult females.

The protein resides in the cytoplasm. Its subcellular location is the nucleus. It functions in the pathway protein modification; protein ubiquitination. Its function is as follows. Component of the SCF (SKP1-CUL1-F-box protein) E3 ubiquitin ligase complex, which mediates the ubiquitination and subsequent proteasomal degradation of target proteins. Through the RING-type zinc finger, seems to recruit the E2 ubiquitination enzyme to the complex and brings it into close proximity to the substrate. This is RING-box protein 1B (Roc1b) from Drosophila melanogaster (Fruit fly).